The sequence spans 396 residues: Tryptophan synthase beta chain (396 aa).

Lys-88 carries the post-translational modification N6-(pyridoxal phosphate)lysine.

It belongs to the TrpB family. In terms of assembly, tetramer of two alpha and two beta chains. Pyridoxal 5'-phosphate is required as a cofactor.

The catalysed reaction is (1S,2R)-1-C-(indol-3-yl)glycerol 3-phosphate + L-serine = D-glyceraldehyde 3-phosphate + L-tryptophan + H2O. Its pathway is amino-acid biosynthesis; L-tryptophan biosynthesis; L-tryptophan from chorismate: step 5/5. Functionally, the beta subunit is responsible for the synthesis of L-tryptophan from indole and L-serine. In Leptospira biflexa serovar Patoc (strain Patoc 1 / Ames), this protein is Tryptophan synthase beta chain.